Consider the following 404-residue polypeptide: Argininosuccinate synthase (404 aa).

Residues 12–20 (AYSGGLDTS) and Ala-40 contribute to the ATP site. L-citrulline contacts are provided by Tyr-92 and Ser-97. Gly-122 contributes to the ATP binding site. Positions 124, 128, and 129 each coordinate L-aspartate. Asn-128 contacts L-citrulline. Residues Arg-132, Ser-181, Ser-190, Glu-266, and Tyr-278 each contribute to the L-citrulline site.

Belongs to the argininosuccinate synthase family. Type 1 subfamily. In terms of assembly, homotetramer.

The protein resides in the cytoplasm. The catalysed reaction is L-citrulline + L-aspartate + ATP = 2-(N(omega)-L-arginino)succinate + AMP + diphosphate + H(+). It participates in amino-acid biosynthesis; L-arginine biosynthesis; L-arginine from L-ornithine and carbamoyl phosphate: step 2/3. The protein is Argininosuccinate synthase of Erwinia tasmaniensis (strain DSM 17950 / CFBP 7177 / CIP 109463 / NCPPB 4357 / Et1/99).